The chain runs to 317 residues: Ribose-phosphate pyrophosphokinase (317 aa).

ATP-binding positions include 43 to 45 (DGE) and 102 to 103 (RQ). Residues His136 and Asp175 each contribute to the Mg(2+) site. Lys198 is an active-site residue. D-ribose 5-phosphate-binding positions include Arg200, Asp224, and 228-232 (DTAGT).

This sequence belongs to the ribose-phosphate pyrophosphokinase family. Class I subfamily. Homohexamer. The cofactor is Mg(2+).

Its subcellular location is the cytoplasm. The catalysed reaction is D-ribose 5-phosphate + ATP = 5-phospho-alpha-D-ribose 1-diphosphate + AMP + H(+). It participates in metabolic intermediate biosynthesis; 5-phospho-alpha-D-ribose 1-diphosphate biosynthesis; 5-phospho-alpha-D-ribose 1-diphosphate from D-ribose 5-phosphate (route I): step 1/1. In terms of biological role, involved in the biosynthesis of the central metabolite phospho-alpha-D-ribosyl-1-pyrophosphate (PRPP) via the transfer of pyrophosphoryl group from ATP to 1-hydroxyl of ribose-5-phosphate (Rib-5-P). In Oceanobacillus iheyensis (strain DSM 14371 / CIP 107618 / JCM 11309 / KCTC 3954 / HTE831), this protein is Ribose-phosphate pyrophosphokinase.